The primary structure comprises 481 residues: Trichosetin biosynthesis cluster MFS transporter (481 aa).

Residues 1–13 (MSTTPQMSQSGFQ) show a composition bias toward polar residues. Positions 1-63 (MSTTPQMSQS…DGPDDPQHPL (63 aa)) are disordered. Positions 20-31 (GAREDVGTEAQE) are enriched in basic and acidic residues. Asn64 is a glycosylation site (N-linked (GlcNAc...) asparagine). The chain crosses the membrane as a helical span at residues 72-92 (LHVGIVSLSTLAANLAATMFA). A glycan (N-linked (GlcNAc...) asparagine) is linked at Asn103. 5 consecutive transmembrane segments (helical) span residues 111–131 (AMTV…LAPL), 147–167 (VYMA…FLVF), 169–189 (IIAG…VADL), 200–220 (ALFA…GGFV), and 228–248 (WTFR…FALM). Asn252 is a glycosylation site (N-linked (GlcNAc...) asparagine). 5 consecutive transmembrane segments (helical) span residues 302-322 (PIVL…FLLF), 353-373 (LLLM…YGWT), 380-400 (WIVP…VVIP), 403-423 (IYLV…ANLL), and 446-466 (GWGN…PWIF).

Belongs to the major facilitator superfamily.

It is found in the cell membrane. Its function is as follows. Efflux pump required for efficient secretion of trichosetin or other secondary metabolies produced by the trichosetin gene cluster. Plays a crucial role in detoxification of the toxic trichosetin in Gibberella fujikuroi cells. This chain is Trichosetin biosynthesis cluster MFS transporter, found in Gibberella fujikuroi (strain CBS 195.34 / IMI 58289 / NRRL A-6831) (Bakanae and foot rot disease fungus).